We begin with the raw amino-acid sequence, 161 residues long: UPF0178 protein BruAb1_1955 (161 aa).

It belongs to the UPF0178 family.

The sequence is that of UPF0178 protein BruAb1_1955 from Brucella abortus biovar 1 (strain 9-941).